Here is a 207-residue protein sequence, read N- to C-terminus: Small ribosomal subunit protein uS4 (207 aa).

A disordered region spans residues 31–55 (KCKLDSKPGQHGRTSGARTSDYGTQ). A compositionally biased stretch (polar residues) spans 42–53 (GRTSGARTSDYG). Residues 97–160 (SRLDNVVYRM…KKQARIVEAL (64 aa)) form the S4 RNA-binding domain.

The protein belongs to the universal ribosomal protein uS4 family. Part of the 30S ribosomal subunit. Contacts protein S5. The interaction surface between S4 and S5 is involved in control of translational fidelity.

One of the primary rRNA binding proteins, it binds directly to 16S rRNA where it nucleates assembly of the body of the 30S subunit. In terms of biological role, with S5 and S12 plays an important role in translational accuracy. This chain is Small ribosomal subunit protein uS4, found in Burkholderia thailandensis (strain ATCC 700388 / DSM 13276 / CCUG 48851 / CIP 106301 / E264).